Here is a 299-residue protein sequence, read N- to C-terminus: Heat stress transcription factor B-2a (299 aa).

The DNA-binding element occupies 21–115 (PTPFLTKTFN…LLREIQRRKI (95 aa)). The disordered stretch occupies residues 119–157 (HQTVVAPSSEQRNQTMVVSPSNSGEDNNNNQVMSSSPSS). The segment at 166 to 211 (TGNGGLSVELLEENEKLRSQNIQLNRELTQMKSICDNIYSLMSNYV) is hydrophobic repeat HR-A/B. Residues 261–264 (KRTR) carry the Nuclear localization signal motif.

The protein belongs to the HSF family. Class B subfamily. As to quaternary structure, homotrimer. Post-translationally, exhibits temperature-dependent phosphorylation.

It is found in the nucleus. Transcriptional regulator that specifically binds DNA sequence 5'-AGAAnnTTCT-3' known as heat shock promoter elements (HSE). In Arabidopsis thaliana (Mouse-ear cress), this protein is Heat stress transcription factor B-2a (HSFB2A).